Reading from the N-terminus, the 487-residue chain is MAVSVTKEEMDYTIKPEAGASNISTEDWPLLLKNYDKLMVRTGHFTPIPAGCSPLKRDLKSYISSGVINLDKPSNPSSHEVVAWMKRILRAEKTGHSGTLDPKVTGCLIVCIDRATRLVKSQQGAGKEYVCVIRLHDKIPGGEAQFKRALETLTGALFQRPPLISAVKRQLRIRTIHESKLYEFDNDRHLGVFWVSCEAGTYIRTLCVHLGLLLGVGAHMQELRRVRSGAMDENNGLVTLHDVLDAQWMYDNQRDESYLRRVIQPLESLLTTYKRIVVKDSAVNAVCYGAKLMIPGLLRFEAGIEVNEEVVLMTTKGEAIAIGIAQMSTVELSTCDHGVVAKVKRCIMERDLYPRRWGLGPVALEKKKLKSAGKLDKYGRANEDTPAKWKTEYKDYSAPEEASAHAASESTAKEDVAAALTTEQDEAPSSPQSKMDVDETKEEKKRKRHEGETAEERAERKRKKKEKKEKKERRKSKQEKEDSDDSD.

Residue Asp101 is the Nucleophile of the active site. The PUA domain maps to 273 to 348; the sequence is YKRIVVKDSA…VVAKVKRCIM (76 aa). Residues 400–410 are compositionally biased toward low complexity; the sequence is EEASAHAASES. Positions 400–487 are disordered; the sequence is EEASAHAASE…QEKEDSDDSD (88 aa). The segment covering 435–459 has biased composition (basic and acidic residues); that stretch reads MDVDETKEEKKRKRHEGETAEERAE. Basic residues predominate over residues 460 to 477; the sequence is RKRKKKEKKEKKERRKSK.

It belongs to the pseudouridine synthase TruB family. As to quaternary structure, component of the small nucleolar ribonucleoprotein particles containing H/ACA-type snoRNAs (H/ACA snoRNPs).

It is found in the nucleus. Its subcellular location is the nucleolus. The enzyme catalyses uridine in 5S rRNA = pseudouridine in 5S rRNA. The catalysed reaction is uridine in snRNA = pseudouridine in snRNA. It carries out the reaction a uridine in mRNA = a pseudouridine in mRNA. Catalytic subunit of H/ACA small nucleolar ribonucleoprotein (H/ACA snoRNP) complex, which catalyzes pseudouridylation of rRNA. This involves the isomerization of uridine such that the ribose is subsequently attached to C5, instead of the normal N1. Pseudouridine ('psi') residues may serve to stabilize the conformation of rRNAs and play a central role in ribosomal RNA processing. The H/ACA snoRNP complex also mediates pseudouridylation of other types of RNAs. Catalyzes pseudouridylation at position 93 in U2 snRNA. Also catalyzes pseudouridylation of mRNAs; H/ACA-type snoRNAs probably guide pseudouridylation of mRNAs. This chain is H/ACA ribonucleoprotein complex subunit cbf5 (cbf5), found in Aspergillus fumigatus (strain ATCC MYA-4609 / CBS 101355 / FGSC A1100 / Af293) (Neosartorya fumigata).